A 550-amino-acid chain; its full sequence is U-box domain-containing protein 40 (550 aa).

A compositionally biased stretch (basic and acidic residues) spans lysine 19 to leucine 29. The tract at residues lysine 19–lysine 55 is disordered. Low complexity predominate over residues serine 38 to serine 52. Residues glutamate 57–proline 127 enclose the U-box domain. 5 ARM repeats span residues glutamate 260 to leucine 299, lysine 301 to leucine 340, aspartate 342 to leucine 381, glutamine 383 to serine 420, and proline 422 to histidine 464.

The enzyme catalyses S-ubiquitinyl-[E2 ubiquitin-conjugating enzyme]-L-cysteine + [acceptor protein]-L-lysine = [E2 ubiquitin-conjugating enzyme]-L-cysteine + N(6)-ubiquitinyl-[acceptor protein]-L-lysine.. The protein operates within protein modification; protein ubiquitination. In terms of biological role, functions as an E3 ubiquitin ligase. In Arabidopsis thaliana (Mouse-ear cress), this protein is U-box domain-containing protein 40 (PUB40).